The following is a 395-amino-acid chain: Tyrosine--tRNA ligase 2 (395 aa).

A 'HIGH' region motif is present at residues 42 to 51 (PTAPDIHLGH). Positions 226–230 (KMSKS) match the 'KMSKS' region motif. Lysine 229 contributes to the ATP binding site. Residues 334 to 394 (IAISNLLKEA…GKRKFARVTI (61 aa)) enclose the S4 RNA-binding domain.

This sequence belongs to the class-I aminoacyl-tRNA synthetase family. TyrS type 2 subfamily. Homodimer.

Its subcellular location is the cytoplasm. The enzyme catalyses tRNA(Tyr) + L-tyrosine + ATP = L-tyrosyl-tRNA(Tyr) + AMP + diphosphate + H(+). Catalyzes the attachment of tyrosine to tRNA(Tyr) in a two-step reaction: tyrosine is first activated by ATP to form Tyr-AMP and then transferred to the acceptor end of tRNA(Tyr). This is Tyrosine--tRNA ligase 2 from Vibrio cholerae serotype O1 (strain ATCC 39315 / El Tor Inaba N16961).